The following is a 269-amino-acid chain: Formamidopyrimidine-DNA glycosylase (269 aa).

The active-site Schiff-base intermediate with DNA is the proline 2. Glutamate 3 functions as the Proton donor in the catalytic mechanism. Residue lysine 57 is the Proton donor; for beta-elimination activity of the active site. Positions 90, 109, and 150 each coordinate DNA. The FPG-type zinc finger occupies 235 to 269; the sequence is RVYGRNGEPCRTCGTPIETAKHGQRSTFFCRRCQV. The active-site Proton donor; for delta-elimination activity is arginine 259.

The protein belongs to the FPG family. In terms of assembly, monomer. It depends on Zn(2+) as a cofactor.

The catalysed reaction is Hydrolysis of DNA containing ring-opened 7-methylguanine residues, releasing 2,6-diamino-4-hydroxy-5-(N-methyl)formamidopyrimidine.. The enzyme catalyses 2'-deoxyribonucleotide-(2'-deoxyribose 5'-phosphate)-2'-deoxyribonucleotide-DNA = a 3'-end 2'-deoxyribonucleotide-(2,3-dehydro-2,3-deoxyribose 5'-phosphate)-DNA + a 5'-end 5'-phospho-2'-deoxyribonucleoside-DNA + H(+). In terms of biological role, involved in base excision repair of DNA damaged by oxidation or by mutagenic agents. Acts as a DNA glycosylase that recognizes and removes damaged bases. Has a preference for oxidized purines, such as 7,8-dihydro-8-oxoguanine (8-oxoG). Has AP (apurinic/apyrimidinic) lyase activity and introduces nicks in the DNA strand. Cleaves the DNA backbone by beta-delta elimination to generate a single-strand break at the site of the removed base with both 3'- and 5'-phosphates. This is Formamidopyrimidine-DNA glycosylase from Pectobacterium atrosepticum (strain SCRI 1043 / ATCC BAA-672) (Erwinia carotovora subsp. atroseptica).